Reading from the N-terminus, the 227-residue chain is UPF0173 metal-dependent hydrolase BCAH820_4729 (227 aa).

This sequence belongs to the UPF0173 family.

The sequence is that of UPF0173 metal-dependent hydrolase BCAH820_4729 from Bacillus cereus (strain AH820).